Here is a 304-residue protein sequence, read N- to C-terminus: Protease HtpX homolog (304 aa).

The next 2 membrane-spanning stretches (helical) occupy residues 14-34 and 39-59; these read VFIV…IGII and YLNG…IMVM. Residue His144 coordinates Zn(2+). Glu145 is a catalytic residue. Residue His148 coordinates Zn(2+). 2 helical membrane-spanning segments follow: residues 161 to 181 and 202 to 222; these read IALV…IFWG and LIIY…ATAI. Residue Glu231 participates in Zn(2+) binding. A disordered region spans residues 276 to 295; that stretch reads SPLKSKKDKPGIFDSHPPIS.

The protein belongs to the peptidase M48B family. The cofactor is Zn(2+).

The protein localises to the cell membrane. In Listeria welshimeri serovar 6b (strain ATCC 35897 / DSM 20650 / CCUG 15529 / CIP 8149 / NCTC 11857 / SLCC 5334 / V8), this protein is Protease HtpX homolog.